Reading from the N-terminus, the 1040-residue chain is Multidrug resistance protein MdtB (1040 aa).

12 helical membrane passes run 25 to 45 (LLMAAILLAGIIGYRFLPVAA), 347 to 367 (LMLAIALVVMIIYLFLRNIPA), 369 to 389 (IIPGVAVPLSLIGTFAVMVFL), 396 to 416 (LTLMALTIATGFVVDDAIVVI), 440 to 460 (IGFTIISLTFSLIAVLIPLLF), 472 to 492 (FAVTLAVAILISAVVSLTLTP), 537 to 557 (WLTLSVAFATLLLSVMLWIVI), 863 to 883 (LGSTVWLIVAAVVAMYIVLGV), 888 to 908 (FIHPITILSTLPTAGVGALLA), 910 to 930 (IIAGSELDIIAIIGIILLIGI), 968 to 988 (ILMTTLAALLGALPLMLSTGV), and 998 to 1018 (IAMVGGLLVSQVLTLFTTPVI).

Belongs to the resistance-nodulation-cell division (RND) (TC 2.A.6) family. MdtB subfamily. As to quaternary structure, part of a tripartite efflux system composed of MdtA, MdtB and MdtC. MdtB forms a heteromultimer with MdtC.

It is found in the cell inner membrane. This chain is Multidrug resistance protein MdtB, found in Salmonella gallinarum (strain 287/91 / NCTC 13346).